A 169-amino-acid chain; its full sequence is Large ribosomal subunit protein bL19m (169 aa).

Residues 1 to 16 (MWSRNVRLLGSWTRSY) constitute a mitochondrion transit peptide.

Belongs to the bacterial ribosomal protein bL19 family. As to quaternary structure, component of the mitochondrial large ribosomal subunit (mt-LSU). Mature yeast 74S mitochondrial ribosomes consist of a small (37S) and a large (54S) subunit. The 37S small subunit contains a 15S ribosomal RNA (15S mt-rRNA) and 34 different proteins. The 54S large subunit contains a 21S rRNA (21S mt-rRNA) and 46 different proteins.

Its subcellular location is the mitochondrion. Component of the mitochondrial ribosome (mitoribosome), a dedicated translation machinery responsible for the synthesis of mitochondrial genome-encoded proteins, including at least some of the essential transmembrane subunits of the mitochondrial respiratory chain. The mitoribosomes are attached to the mitochondrial inner membrane and translation products are cotranslationally integrated into the membrane. bL19m is essential for respiration. This chain is Large ribosomal subunit protein bL19m (IMG1), found in Saccharomyces cerevisiae (strain ATCC 204508 / S288c) (Baker's yeast).